The primary structure comprises 1025 residues: Putative calcium-transporting ATPase 11, plasma membrane-type (1025 aa).

At 1 to 157 (MSNLLKDFEV…NRYTEKPARS (157 aa)) the chain is on the cytoplasmic side. The tract at residues 19 to 30 (ARQRWRSSVGLV) is interaction with calmodulin. Residues 158 to 178 (FLTFVWEALQDITLIILMVCA) traverse the membrane as a helical segment. The Lumenal portion of the chain corresponds to 179–196 (VVSIGVGVATEGFPKGMY). Residues 197–217 (DGTGILLSIILVVMVTAISDY) traverse the membrane as a helical segment. The Cytoplasmic segment spans residues 218 to 345 (KQSLQFRDLD…EDETPLQVKL (128 aa)). The chain crosses the membrane as a helical span at residues 346-365 (NGVATIIGKIGLGFAVLTFV). At 366–395 (VLCIRFVVEKATAGSITEWSSEDALTLLDY) the chain is on the lumenal side. Residues 396–413 (FAIAVTIIVVAVPEGLPL) form a helical membrane-spanning segment. The Cytoplasmic segment spans residues 414 to 801 (AVTLSLAFAM…KWGRAVYINI (388 aa)). Residue Asp451 is the 4-aspartylphosphate intermediate of the active site. Mg(2+) is bound by residues Asp746 and Asp750. Residues 802 to 820 (QKFVQFQLTVNVVALIINF) traverse the membrane as a helical segment. Over 821–831 (VSACITGSAPL) the chain is Lumenal. Residues 832 to 852 (TAVQLLWVNMIMDTLGALALA) traverse the membrane as a helical segment. Residues 853–872 (TEPPNEGLMKRQPIGRTASF) lie on the Cytoplasmic side of the membrane. A helical membrane pass occupies residues 873–895 (ITRAMWRNIIGQSIYQLIVLGIL). Topologically, residues 896–907 (NFAGKQILNLNG) are lumenal. Residues 908–929 (PDSTIVLNTIIFNSFVFCQVFN) traverse the membrane as a helical segment. Residues 930–947 (EVNSREIEKINVFEGMFK) are Cytoplasmic-facing. The helical transmembrane segment at 948–969 (SWVFVAVMTATVGFQVIIVEFL) threads the bilayer. Residues 970 to 979 (GAFASTVPLS) are Lumenal-facing. The helical transmembrane segment at 980–1001 (WQHWLLCILIGSVSMILAVGLK) threads the bilayer. Residues 1002 to 1025 (CIPVESNRHHDGYELLPSGPSDSA) lie on the Cytoplasmic side of the membrane.

Belongs to the cation transport ATPase (P-type) (TC 3.A.3) family. Type IIB subfamily.

It localises to the membrane. The enzyme catalyses Ca(2+)(in) + ATP + H2O = Ca(2+)(out) + ADP + phosphate + H(+). With respect to regulation, activated by calmodulin. Functionally, this magnesium-dependent enzyme catalyzes the hydrolysis of ATP coupled with the translocation of calcium from the cytosol out of the cell or into organelles. The polypeptide is Putative calcium-transporting ATPase 11, plasma membrane-type (ACA11) (Arabidopsis thaliana (Mouse-ear cress)).